Reading from the N-terminus, the 277-residue chain is Type IV methyl-directed restriction enzyme EcoKMcrA (277 aa).

An HNH domain is found at 207–257 (CENCGKNAPFYLNDGNPYLEVHHVIPLSSGGADTTDNCVALCPNCHRELHY).

Restriction of 5-methyl and 5-hydroxymethylcytosines at the specific DNA sequence 5'-C(me)CGG-3'. The sequence is that of Type IV methyl-directed restriction enzyme EcoKMcrA from Escherichia coli (strain K12).